Here is a 417-residue protein sequence, read N- to C-terminus: MAEIKNYSLNFGPQHPAAHGVLRLVLELDGEVVQRADPHIGLLHRATEKLAEHKTYIQSLPYMDRLDYVSMMCNEQAYCLAIEKMLGIEVPLRAKYIRTMFGEITRLLNHLMWLGSHGNDCGSSTILIYTFREREDLFDMYEAVSGARMHAAYFRPGGVYRDLPDSMAQYKVSKIKNAKAIEELNRNRQGSLLDFIDDFTQRFPKCVDEYETLLTDNRIWKQRTVGIGVVPAERALNLGMTGPMLRGSGIAWDLRKKQPYDAYDRVDFDVPVGVTGDSYDRYLVRVQEMRESNRIIKQCVDWLRANPGPVITDNHKIAPPSREAMKSNMEELIHHFKLFTEGFRVPAGEAYAAVEHPKGEFGIYMVSDGANKPYRLKIRAPGFAHLATLDEMARGHMLADAVAIIGTMDIVFGEIDR.

This sequence belongs to the complex I 49 kDa subunit family. As to quaternary structure, NDH-1 is composed of 14 different subunits. Subunits NuoB, C, D, E, F, and G constitute the peripheral sector of the complex.

It localises to the cell inner membrane. It carries out the reaction a quinone + NADH + 5 H(+)(in) = a quinol + NAD(+) + 4 H(+)(out). In terms of biological role, NDH-1 shuttles electrons from NADH, via FMN and iron-sulfur (Fe-S) centers, to quinones in the respiratory chain. The immediate electron acceptor for the enzyme in this species is believed to be ubiquinone. Couples the redox reaction to proton translocation (for every two electrons transferred, four hydrogen ions are translocated across the cytoplasmic membrane), and thus conserves the redox energy in a proton gradient. This Acidovorax sp. (strain JS42) protein is NADH-quinone oxidoreductase subunit D.